Here is a 248-residue protein sequence, read N- to C-terminus: Ribonuclease PH (248 aa).

Residues arginine 86 and glycine 124–arginine 126 contribute to the phosphate site.

Belongs to the RNase PH family. As to quaternary structure, homohexameric ring arranged as a trimer of dimers.

The catalysed reaction is tRNA(n+1) + phosphate = tRNA(n) + a ribonucleoside 5'-diphosphate. Phosphorolytic 3'-5' exoribonuclease that plays an important role in tRNA 3'-end maturation. Removes nucleotide residues following the 3'-CCA terminus of tRNAs; can also add nucleotides to the ends of RNA molecules by using nucleoside diphosphates as substrates, but this may not be physiologically important. Probably plays a role in initiation of 16S rRNA degradation (leading to ribosome degradation) during starvation. The protein is Ribonuclease PH of Clostridium perfringens (strain 13 / Type A).